We begin with the raw amino-acid sequence, 142 residues long: Large ribosomal subunit protein uL11 (142 aa).

This sequence belongs to the universal ribosomal protein uL11 family. As to quaternary structure, part of the ribosomal stalk of the 50S ribosomal subunit. Interacts with L10 and the large rRNA to form the base of the stalk. L10 forms an elongated spine to which L12 dimers bind in a sequential fashion forming a multimeric L10(L12)X complex. In terms of processing, one or more lysine residues are methylated.

Forms part of the ribosomal stalk which helps the ribosome interact with GTP-bound translation factors. In Buchnera aphidicola subsp. Schizaphis graminum (strain Sg), this protein is Large ribosomal subunit protein uL11.